The sequence spans 21 residues: Glucan endo-1,3-beta-glucosidase 2 (21 aa).

The segment at 1-21 (APGDLLWSDEFDGAAGSAPNP) is disordered.

It catalyses the reaction Hydrolysis of (1-&gt;3)-beta-D-glucosidic linkages in (1-&gt;3)-beta-D-glucans.. The sequence is that of Glucan endo-1,3-beta-glucosidase 2 from Papiliotrema laurentii (Cryptococcus laurentii).